A 245-amino-acid chain; its full sequence is Terpene cyclase ausL (245 aa).

The next 7 membrane-spanning stretches (helical) occupy residues 17–37, 51–71, 76–96, 113–133, 138–158, 170–190, and 206–226; these read ILAI…VNYI, IGIL…WMFP, HWQG…LVTL, IVFI…ALAA, ALGF…GGIA, SYLI…KLCI, and MCWF…FLYF.

The protein belongs to the paxB family.

The protein resides in the membrane. Its pathway is secondary metabolite biosynthesis; terpenoid biosynthesis. Functionally, terpene cyclase; part of the gene cluster A that mediates the biosynthesis of the fungal meroterpenoid acetoxydehydroaustin. The first step of the pathway is the synthesis of 3,5-dimethylorsellinic acid by the polyketide synthase ausA. 3,5-dimethylorsellinic acid is then prenylated by the polyprenyl transferase ausN. Further epoxidation by the FAD-dependent monooxygenase ausM and cyclization by the probable terpene cyclase ausL lead to the formation of protoaustinoid A. Protoaustinoid A is then oxidized to spiro-lactone preaustinoid A3 by the combined action of the FAD-binding monooxygenases ausB and ausC, and the dioxygenase ausE. Acid-catalyzed keto-rearrangement and ring contraction of the tetraketide portion of preaustinoid A3 by ausJ lead to the formation of preaustinoid A4. The aldo-keto reductase ausK, with the help of ausH, is involved in the next step by transforming preaustinoid A4 into isoaustinone which is in turn hydroxylated by the P450 monooxygenase ausI to form austinolide. The cytochrome P450 monooxygenase ausG then modifies austinolide to austinol. Austinol is further acetylated to austin by the O-acetyltransferase ausP, which spontaneously changes to dehydroaustin. The cytochrome P450 monooxygenase then converts dehydroaustin is into 7-dehydrodehydroaustin. The hydroxylation catalyzed by ausR permits the second O-acetyltransferase ausQ to add an additional acetyl group to the molecule, leading to the formation of acetoxydehydroaustin. Due to genetic rearrangements of the clusters and the subsequent loss of some enzymes, the end product of the Penicillium brasilianum austinoid biosynthesis clusters is acetoxydehydroaustin. This is Terpene cyclase ausL from Penicillium brasilianum.